Here is a 345-residue protein sequence, read N- to C-terminus: Dihydroorotase (345 aa).

Residues His13 and His15 each coordinate Zn(2+). Substrate is bound by residues 15–17 and Asn41; that span reads HLR. The Zn(2+) site is built by Lys99, His136, and His174. Lys99 carries the post-translational modification N6-carboxylysine. Residue His136 participates in substrate binding. Leu219 contributes to the substrate binding site. Asp247 serves as a coordination point for Zn(2+). Residue Asp247 is part of the active site. Substrate-binding residues include His251 and Ala263.

Belongs to the metallo-dependent hydrolases superfamily. DHOase family. Class II DHOase subfamily. In terms of assembly, homodimer. Zn(2+) serves as cofactor.

The catalysed reaction is (S)-dihydroorotate + H2O = N-carbamoyl-L-aspartate + H(+). It participates in pyrimidine metabolism; UMP biosynthesis via de novo pathway; (S)-dihydroorotate from bicarbonate: step 3/3. In terms of biological role, catalyzes the reversible cyclization of carbamoyl aspartate to dihydroorotate. The chain is Dihydroorotase from Agrobacterium fabrum (strain C58 / ATCC 33970) (Agrobacterium tumefaciens (strain C58)).